A 120-amino-acid chain; its full sequence is Probable early E4 13 kDa protein (120 aa).

The sequence is that of Probable early E4 13 kDa protein from Human adenovirus A serotype 12 (HAdV-12).